Reading from the N-terminus, the 163-residue chain is Interleukin-17F (163 aa).

Residues 1–30 (MTVKSLHVTAMVKYLLLLILGLAFLRETAA) form the signal peptide. A glycan (N-linked (GlcNAc...) asparagine) is linked at N83. Cystine bridges form between C102–C152 and C107–C154.

The protein belongs to the IL-17 family. In terms of assembly, homodimer; disulfide-linked. Heterodimer with IL17A (IL17A-IL17F). Forms complexes with IL17RA and IL17RC receptors with 2:1 binding stoichiometry: two receptor chains for one interleukin molecule. IL17F homodimer forms predominantly complexes with IL17RC homodimer, whereas IL17A-IL17F favors complexes with IL17RA-IL17RC. IL17RA and IL17RC chains cannot distinguish between IL17A and IL17F molecules, potentially enabling the formation of topologically distinct complexes.

The protein localises to the secreted. Functionally, effector cytokine of innate and adaptive immune system involved in antimicrobial host defense and maintenance of tissue integrity. IL17A-IL17F signals via IL17RA-IL17RC heterodimeric receptor complex, triggering homotypic interaction of IL17RA and IL17RC chains with TRAF3IP2 adapter through SEFIR domains. This leads to downstream TRAF6-mediated activation of NF-kappa-B and MAPkinase pathways ultimately resulting in transcriptional activation of cytokines, chemokines, antimicrobial peptides and matrix metalloproteinases, with potential strong immune inflammation. IL17A-IL17F is primarily involved in host defense against extracellular bacteria and fungi by inducing neutrophilic inflammation. As signature effector cytokine of T-helper 17 cells (Th17), primarily induces neutrophil activation and recruitment at infection and inflammatory sites. Stimulates the production of antimicrobial beta-defensins DEFB1, DEFB103A, and DEFB104A by mucosal epithelial cells, limiting the entry of microbes through the epithelial barriers. IL17F homodimer can signal via IL17RC homodimeric receptor complex, triggering downstream activation of TRAF6 and NF-kappa-B signaling pathway. Via IL17RC induces transcriptional activation of IL33, a potent cytokine that stimulates group 2 innate lymphoid cells and adaptive T-helper 2 cells involved in pulmonary allergic response to fungi. Likely via IL17RC, promotes sympathetic innervation of peripheral organs by coordinating the communication between gamma-delta T cells and parenchymal cells. Stimulates sympathetic innervation of thermogenic adipose tissue by driving TGFB1 expression. Regulates the composition of intestinal microbiota and immune tolerance by inducing antimicrobial proteins that specifically control the growth of commensal Firmicutes and Bacteroidetes. This Callithrix jacchus (White-tufted-ear marmoset) protein is Interleukin-17F (IL17F).